The sequence spans 208 residues: FMRFamide-like neuropeptide 18 (208 aa).

Positions 1 to 21 (MQRWSGVLLISLCCLLRGALA) are cleaved as a signal peptide. The propeptide occupies 22 to 83 (YTEPIYEIVE…VWEKRESSVQ (62 aa)). The residue at position 93 (phenylalanine 93) is a Phenylalanine amide. Positions 97–101 (AYFDE) are excised as a propeptide. Phenylalanine 111 bears the Phenylalanine amide mark. Positions 115–119 (SYFDE) are excised as a propeptide. At phenylalanine 129 the chain carries Phenylalanine amide. The propeptide occupies 133 to 137 (DVPMD). Position 147 is a phenylalanine amide (phenylalanine 147). Positions 151–158 (DYMADSFD) are excised as a propeptide. Residues phenylalanine 169 and phenylalanine 180 each carry the phenylalanine amide modification. Positions 184–195 (SDLEEHYAGVLL) are excised as a propeptide. Phenylalanine 205 carries the post-translational modification Phenylalanine amide.

It belongs to the FARP (FMRFamide related peptide) family. May be processed by convertase egl-3. Expressed in head neurons and weakly in ventral nerve cord. Expressed in the interneurons AVA, AIY and RIG, the motor neuron RIM and the pharyngeal neurons M2 and M3. EMPGVLRF-amide: Expressed in cholinergic pharyngeal motoneurons M2 and M3.

The protein localises to the secreted. Functionally, FMRFamide-like neuropeptides. Ligand to G-protein coupled receptor npr-1. Involved in modulating locomotion quiescence during the sleep-like state called lethargus which occurs during molting between larval and adult stages, acting via npr-1. Together with flp-1, plays a homeostatic role by acting on the GABAergic neural transmission at neuromuscular junctions to prevent overexcitation of the locomotor circuit. Plays a role in the navigational capacity of sperm and the targeting of sperm derived from males to the fertilization site in the uterus of hermaphrodites. Its function is as follows. SVPGVLRF-amide: Excites muscle tension. In terms of biological role, activates the G-protein coupled receptor npr-1 more effectively than other flp-18 peptides. Inhibits the activity of dissected pharyngeal myogenic muscle system. This chain is FMRFamide-like neuropeptide 18, found in Caenorhabditis elegans.